Consider the following 230-residue polypeptide: 8-demethylnovobiocic acid C(8)-methyltransferase (230 aa).

It belongs to the methyltransferase superfamily.

It catalyses the reaction 8-desmethylnovobiocic acid + S-adenosyl-L-methionine = novobiocic acid + S-adenosyl-L-homocysteine + H(+). It functions in the pathway antibiotic biosynthesis; novobiocin biosynthesis. Its function is as follows. C-methyltransferase that methylates 8-demethylnovobiocic acid to produce novobiocic acid in the novobiocin biosynthesis pathway. Novobiocin is an aminocoumarin family antibiotic that targets bacterial DNA gyrases. This Streptomyces niveus (Streptomyces spheroides) protein is 8-demethylnovobiocic acid C(8)-methyltransferase (novO).